The sequence spans 597 residues: NADPH-dependent diflavin oxidoreductase 1 (597 aa).

A Flavodoxin-like domain is found at 6–150; the sequence is LLVLFGSQTG…AVDPWLRDLW (145 aa). Residues 12-17, 59-62, 97-106, and Asp132 each bind FMN; these read SQTGTA, ATTG, and LGDSSYAKFN. The tract at residues 188 to 207 is disordered; the sequence is GSEGQRVAHPGSQEPPSESK. The 242-residue stretch at 206–447 folds into the FAD-binding FR-type domain; sequence SKPFLAPMIS…VRPGSLAFPE (242 aa). Residues Arg350, 382-385, and 416-419 each bind FAD; these read RAFS and GLCS. Residues Thr460, 515-516, 521-525, and Asp558 each bind NADP(+); these read SR and KVYVQ. An FAD-binding site is contributed by Trp596.

The protein belongs to the NADPH-dependent diflavin oxidoreductase NDOR1 family. In the N-terminal section; belongs to the flavodoxin family. This sequence in the C-terminal section; belongs to the flavoprotein pyridine nucleotide cytochrome reductase family. In terms of assembly, interacts with CIAPIN1; as part of the cytosolic iron-sulfur (Fe-S) protein assembly (CIA) machinery. Interacts with DCPS. Requires FAD as cofactor. The cofactor is FMN. In terms of tissue distribution, low expression in brain, heart, kidney, pancreas, prostate and skeletal muscle. Highest levels in the placenta. Expressed in cancer cell lines including promyelocytic leukemia, HeLaS3, chronic myelagenous leukemia, lymphoblastic leukemia, Burkitt's lymphoma, colorectal adenocarcinoma, lung carcinoma, and melanoma G-361.

Its subcellular location is the cytoplasm. It is found in the perinuclear region. The catalysed reaction is 2 oxidized [2Fe-2S]-[protein] + NADPH = 2 reduced [2Fe-2S]-[protein] + NADP(+) + H(+). In terms of biological role, NADPH-dependent reductase which is a central component of the cytosolic iron-sulfur (Fe-S) protein assembly (CIA) machinery. Transfers electrons from NADPH via its FAD and FMN prosthetic groups to the [2Fe-2S] cluster of CIAPIN1, another key component of the CIA machinery. In turn, this reduced cluster provides electrons for assembly of cytosolic iron-sulfur cluster proteins. It can also reduce the [2Fe-2S] cluster of CISD1 and activate this protein implicated in Fe/S cluster repair. In vitro can fully activate methionine synthase/MTR in the presence of soluble cytochrome b5/CYB5A. The sequence is that of NADPH-dependent diflavin oxidoreductase 1 from Homo sapiens (Human).